We begin with the raw amino-acid sequence, 519 residues long: Galactose-1-phosphate uridylyltransferase (519 aa).

The protein belongs to the galactose-1-phosphate uridylyltransferase type 2 family.

The protein resides in the cytoplasm. It carries out the reaction alpha-D-galactose 1-phosphate + UDP-alpha-D-glucose = alpha-D-glucose 1-phosphate + UDP-alpha-D-galactose. Its pathway is carbohydrate metabolism; galactose metabolism. The sequence is that of Galactose-1-phosphate uridylyltransferase from Caldanaerobacter subterraneus subsp. tengcongensis (strain DSM 15242 / JCM 11007 / NBRC 100824 / MB4) (Thermoanaerobacter tengcongensis).